Here is a 445-residue protein sequence, read N- to C-terminus: 2-oxoisovalerate dehydrogenase subunit alpha, mitochondrial (445 aa).

Residues 1–45 (MAVAIAAARVWRLNRGLSQAALLLLRQPGARGLARSHPPRQQQQF) constitute a mitochondrion transit peptide. Residues 33–52 (LARSHPPRQQQQFSSLDDKP) form a disordered region. 2 residues coordinate thiamine diphosphate: Tyr-158 and Arg-159. Ser-206 serves as a coordination point for K(+). Residue Ser-207 participates in thiamine diphosphate binding. K(+) is bound by residues Pro-208, Thr-211, and Gln-212. Glu-238 contacts Mg(2+). Gly-239, Ala-240, and Arg-265 together coordinate thiamine diphosphate. Residues Asn-267 and Tyr-269 each contribute to the Mg(2+) site. Residue His-336 coordinates thiamine diphosphate. Ser-337 is subject to Phosphoserine; by BCKDK. Thr-338 carries the post-translational modification Phosphothreonine. Ser-339 and Ser-347 each carry phosphoserine. An N6-acetyllysine; alternate modification is found at Lys-356. Residue Lys-356 is modified to N6-succinyllysine; alternate. Residue Lys-380 is modified to N6-succinyllysine.

This sequence belongs to the BCKDHA family. Heterotetramer of 2 alpha/BCKDHA and 2 beta chains/BCKDHB that forms the branched-chain alpha-keto acid decarboxylase (E1) component of the BCKD complex. The branched-chain alpha-ketoacid dehydrogenase is a large complex composed of three major building blocks E1, E2 and E3. It is organized around E2, a 24-meric cubic core composed of DBT, to which are associated 6 to 12 copies of E1, and approximately 6 copies of the dehydrogenase E3, a DLD dimer. Interacts with PPM1K. Requires thiamine diphosphate as cofactor. Mg(2+) serves as cofactor. Post-translationally, phosphorylated at Ser-337 by BCKDK and dephosphorylated by protein phosphatase PPM1K.

Its subcellular location is the mitochondrion matrix. It catalyses the reaction N(6)-[(R)-lipoyl]-L-lysyl-[protein] + 3-methyl-2-oxobutanoate + H(+) = N(6)-[(R)-S(8)-2-methylpropanoyldihydrolipoyl]-L-lysyl-[protein] + CO2. Its function is as follows. Together with BCKDHB forms the heterotetrameric E1 subunit of the mitochondrial branched-chain alpha-ketoacid dehydrogenase (BCKD) complex. The BCKD complex catalyzes the multi-step oxidative decarboxylation of alpha-ketoacids derived from the branched-chain amino-acids valine, leucine and isoleucine producing CO2 and acyl-CoA which is subsequently utilized to produce energy. The E1 subunit catalyzes the first step with the decarboxylation of the alpha-ketoacid forming an enzyme-product intermediate. A reductive acylation mediated by the lipoylamide cofactor of E2 extracts the acyl group from the E1 active site for the next step of the reaction. The protein is 2-oxoisovalerate dehydrogenase subunit alpha, mitochondrial of Homo sapiens (Human).